We begin with the raw amino-acid sequence, 322 residues long: ATP-dependent 6-phosphofructokinase (322 aa).

ATP is bound at residue Gly11. Position 21–25 (21–25 (RAVTR)) interacts with ADP. ATP contacts are provided by residues 72–73 (RC) and 102–105 (GDGS). Residue Asp103 participates in Mg(2+) binding. 127–129 (TID) is a binding site for substrate. Asp129 (proton acceptor) is an active-site residue. Residue Arg156 coordinates ADP. Residues Arg164 and 171–173 (MGR) contribute to the substrate site. Residues 187–189 (GAE), Arg213, and 215–217 (KKH) contribute to the ADP site. Substrate contacts are provided by residues Glu224, Arg245, and 251-254 (HIQR).

This sequence belongs to the phosphofructokinase type A (PFKA) family. ATP-dependent PFK group I subfamily. Prokaryotic clade 'B1' sub-subfamily. As to quaternary structure, homotetramer. Requires Mg(2+) as cofactor.

It is found in the cytoplasm. The catalysed reaction is beta-D-fructose 6-phosphate + ATP = beta-D-fructose 1,6-bisphosphate + ADP + H(+). Its pathway is carbohydrate degradation; glycolysis; D-glyceraldehyde 3-phosphate and glycerone phosphate from D-glucose: step 3/4. With respect to regulation, allosterically activated by ADP and other diphosphonucleosides, and allosterically inhibited by phosphoenolpyruvate. Its function is as follows. Catalyzes the phosphorylation of D-fructose 6-phosphate to fructose 1,6-bisphosphate by ATP, the first committing step of glycolysis. This chain is ATP-dependent 6-phosphofructokinase, found in Staphylococcus epidermidis (strain ATCC 12228 / FDA PCI 1200).